Reading from the N-terminus, the 266-residue chain is Thiazole synthase (266 aa).

Lys-110 functions as the Schiff-base intermediate with DXP in the catalytic mechanism. 1-deoxy-D-xylulose 5-phosphate contacts are provided by residues Gly-171, 197–198 (AG), and 219–220 (AT).

It belongs to the ThiG family. Homotetramer. Forms heterodimers with either ThiH or ThiS.

Its subcellular location is the cytoplasm. The catalysed reaction is [ThiS sulfur-carrier protein]-C-terminal-Gly-aminoethanethioate + 2-iminoacetate + 1-deoxy-D-xylulose 5-phosphate = [ThiS sulfur-carrier protein]-C-terminal Gly-Gly + 2-[(2R,5Z)-2-carboxy-4-methylthiazol-5(2H)-ylidene]ethyl phosphate + 2 H2O + H(+). It functions in the pathway cofactor biosynthesis; thiamine diphosphate biosynthesis. Catalyzes the rearrangement of 1-deoxy-D-xylulose 5-phosphate (DXP) to produce the thiazole phosphate moiety of thiamine. Sulfur is provided by the thiocarboxylate moiety of the carrier protein ThiS. In vitro, sulfur can be provided by H(2)S. The protein is Thiazole synthase of Thermobifida fusca (strain YX).